The following is a 371-amino-acid chain: UDP-N-acetylglucosamine--N-acetylmuramyl-(pentapeptide) pyrophosphoryl-undecaprenol N-acetylglucosamine transferase (371 aa).

Residues 15–17, Asn-126, Arg-172, Ser-199, Ile-256, 275–280, and Gln-301 contribute to the UDP-N-acetyl-alpha-D-glucosamine site; these read TGG and ALTVSE.

Belongs to the glycosyltransferase 28 family. MurG subfamily.

It is found in the cell inner membrane. It catalyses the reaction di-trans,octa-cis-undecaprenyl diphospho-N-acetyl-alpha-D-muramoyl-L-alanyl-D-glutamyl-meso-2,6-diaminopimeloyl-D-alanyl-D-alanine + UDP-N-acetyl-alpha-D-glucosamine = di-trans,octa-cis-undecaprenyl diphospho-[N-acetyl-alpha-D-glucosaminyl-(1-&gt;4)]-N-acetyl-alpha-D-muramoyl-L-alanyl-D-glutamyl-meso-2,6-diaminopimeloyl-D-alanyl-D-alanine + UDP + H(+). It participates in cell wall biogenesis; peptidoglycan biosynthesis. Its function is as follows. Cell wall formation. Catalyzes the transfer of a GlcNAc subunit on undecaprenyl-pyrophosphoryl-MurNAc-pentapeptide (lipid intermediate I) to form undecaprenyl-pyrophosphoryl-MurNAc-(pentapeptide)GlcNAc (lipid intermediate II). In Francisella tularensis subsp. mediasiatica (strain FSC147), this protein is UDP-N-acetylglucosamine--N-acetylmuramyl-(pentapeptide) pyrophosphoryl-undecaprenol N-acetylglucosamine transferase.